The following is a 165-amino-acid chain: Thiol peroxidase (165 aa).

The Thioredoxin domain occupies 18 to 165 (PQKGAQAPAF…PNYAAALAAL (148 aa)). The Cysteine sulfenic acid (-SOH) intermediate role is filled by cysteine 60. A disulfide bridge links cysteine 60 with cysteine 94.

It belongs to the peroxiredoxin family. Tpx subfamily. In terms of assembly, homodimer.

The enzyme catalyses a hydroperoxide + [thioredoxin]-dithiol = an alcohol + [thioredoxin]-disulfide + H2O. Its function is as follows. Thiol-specific peroxidase that catalyzes the reduction of hydrogen peroxide and organic hydroperoxides to water and alcohols, respectively. Plays a role in cell protection against oxidative stress by detoxifying peroxides. The protein is Thiol peroxidase of Pseudomonas aeruginosa (strain ATCC 15692 / DSM 22644 / CIP 104116 / JCM 14847 / LMG 12228 / 1C / PRS 101 / PAO1).